Consider the following 322-residue polypeptide: NADH-quinone oxidoreductase subunit H (322 aa).

8 consecutive transmembrane segments (helical) span residues 14–34 (IFMHSFFVLLMVVMCGAYMSF), 81–101 (YIFVLAPAIAFIISLMIIPVI), 114–134 (VGVLFFLMISALTVYSVLLAG), 149–169 (SIAQTLSYEVFLGLSLMGIVA), 186–206 (LWNIVPQFLGFVVFFISGMAL), 237–257 (FFISEYISVISISSFMVTLFF), 265–285 (FPPVVWFIIKTFMIVLFFVLI), and 302–322 (WKFLLPIALLNLLVTAGYILI).

Belongs to the complex I subunit 1 family. As to quaternary structure, NDH-1 is composed of 13 different subunits. Subunits NuoA, H, J, K, L, M, N constitute the membrane sector of the complex.

The protein localises to the cell inner membrane. It catalyses the reaction a quinone + NADH + 5 H(+)(in) = a quinol + NAD(+) + 4 H(+)(out). Its function is as follows. NDH-1 shuttles electrons from NADH, via FMN and iron-sulfur (Fe-S) centers, to quinones in the respiratory chain. The immediate electron acceptor for the enzyme in this species is believed to be ubiquinone. Couples the redox reaction to proton translocation (for every two electrons transferred, four hydrogen ions are translocated across the cytoplasmic membrane), and thus conserves the redox energy in a proton gradient. This subunit may bind ubiquinone. The protein is NADH-quinone oxidoreductase subunit H of Blochmanniella floridana.